The primary structure comprises 399 residues: Proteinase-activated receptor 2 (399 aa).

The signal sequence occupies residues 1–25; that stretch reads MRSLSLAWLLGGITLLAASVSCSRT. A propeptide spans 26-38 (removed for receptor activation); sequence ENLAPGRNNSKGR. An N-linked (GlcNAc...) asparagine glycan is attached at Asn33. The Extracellular portion of the chain corresponds to 39–73; sequence SLIGRLETQPPITGKGVPVEPGFSIDEFSASILTG. The chain crosses the membrane as a helical span at residues 74 to 103; it reads KLTTVFLPVVYIIVFVIGLPSNGMALWIFL. The Cytoplasmic portion of the chain corresponds to 104-110; sequence FRTKKKH. The helical transmembrane segment at 111-139 threads the bilayer; that stretch reads PAVIYMANLALADLLSVIWFPLKISYHLH. The Extracellular portion of the chain corresponds to 140–151; it reads GNNWVYGEALCK. Cys150 and Cys228 are disulfide-bonded. The helical transmembrane segment at 152–179 threads the bilayer; it reads VLIGFFYGNMYCSILFMTCLSVQRYWVI. Residues 180–185 lie on the Cytoplasmic side of the membrane; it reads VNPMGH. A helical membrane pass occupies residues 186–213; the sequence is PRKKANIAVGVSLAIWLLIFLVTIPLYV. Residues 214–237 lie on the Extracellular side of the membrane; it reads MKQTIYIPALNITTCHDVLPEEVL. An N-linked (GlcNAc...) asparagine glycan is attached at Asn224. Residues 238–271 form a helical membrane-spanning segment; the sequence is VGDMFNYFLSLAIGVFLFPALLTASAYVLMIKTL. Over 272–279 the chain is Cytoplasmic; it reads RSSAMDEH. Residues 280–319 form a helical membrane-spanning segment; that stretch reads SEKKRQRAIRLIITVLAMYFICFAPSNLLLVVHYFLIKTQ. Topologically, residues 320-325 are extracellular; that stretch reads RQSHVY. Residues 326-349 traverse the membrane as a helical segment; sequence ALYLVALCLSTLNSCIDPFVYYFV. Residues 350 to 399 lie on the Cytoplasmic side of the membrane; that stretch reads SKDFRDHARNALLCRSVRTVNRMQISLSSNKFSRKSGSYSSSSTSVKTSY. A lipid anchor (S-palmitoyl cysteine) is attached at Cys363.

The protein belongs to the G-protein coupled receptor 1 family. In terms of assembly, interacts with TLR4, COPS5 and TMED2. Interacts with GNAQ, GNA11, GNA12, GNA13 and GNA14. In terms of processing, a proteolytic cleavage generates a new N-terminus that functions as a tethered ligand. Activating serine proteases include trypsin, mast cell tryptase, coagulation factors VII and Xa, myeloblastin/PRTN3 and membrane-type serine protease 1/ST14. Proposed subsequent cleavage by serine proteases is leading to receptor deactivation and include neutrophil elastase and cathepsin G. At least in part, implicated proteases are also shown to activate the receptor; the glycosylation status of the receptor is thought to contribute to the difference. N-glycosylated and sialylated. Post-translationally, multiple phosphorylated on serine and threonine residues in the cytoplasmic region upon receptor activation; required for receptor desensitization and recruitment of beta-arrestin. In terms of processing, monoubiquitinated by Cbl at the plasma membrane and in early endosomes; not required for receptor endocytosis but for translocation to late endosomes or lysosomes. Deubiquitination involves Stambp and Usp8; required for lysosomal trafficking and receptor degradation.

It localises to the cell membrane. Receptor for trypsin and trypsin-like enzymes coupled to G proteins. Its function is mediated through the activation of several signaling pathways including phospholipase C (PLC), intracellular calcium, mitogen-activated protein kinase (MAPK), I-kappaB kinase/NF-kappaB and Rho. Can also be transactivated by cleaved F2r/Par1. Involved in modulation of inflammatory responses and regulation of innate and adaptive immunity, and acts as a sensor for proteolytic enzymes generated during infection. Generally is promoting inflammation. Can signal synergistically with Tlr4 and probably Tlr2 in inflammatory responses and modulates Tlr3 signaling. Has a protective role in establishing the endothelial barrier; the activity involves coagulation factor X. Regulates endothelial cell barrier integrity during neutrophil extravasation, probably following proteolytic cleavage by PRTN3. Proposed to have a bronchoprotective role in airway epithelium, but also shown to compromise the airway epithelial barrier by interrupting E-cadherin adhesion. Involved in the regulation of vascular tone; activation results in hypotension presumably mediated by vasodilation. Associates with a subset of G proteins alpha subunits such as GNAQ, GNA11, GNA14, GNA12 and GNA13, but probably not with G(o)-alpha, G(i) subunit alpha-1 and G(i) subunit alpha-2. Believed to be a class B receptor which internalizes as a complex with arrestin and traffic with it to endosomal vesicles, presumably as desensitized receptor, for extended periods of time. Mediates inhibition of TNF-alpha stimulated JNK phosphorylation via coupling to GNAQ and GNA11; the function involves dissociation of Ripk1 and Tradd from Tnfr1. Mediates phosphorylation of nuclear factor NF-kappa-B RELA subunit at 'Ser-536'; the function involves Ikbkb and is predominantly independent of G proteins. Involved in cellular migration. Involved in cytoskeletal rearrangement and chemotaxis through beta-arrestin-promoted scaffolds; the function is independent of GNAQ and GNA11 and involves promotion of cofilin dephosphorylation and actin filament severing. Induces redistribution of Cops5 from the plasma membrane to the cytosol and activation of the JNK cascade is mediated by Cops5. Involved in the recruitment of leukocytes to the sites of inflammation and is the major PAR receptor capable of modulating eosinophil function such as pro-inflammatory cytokine secretion, superoxide production and degranulation. During inflammation promotes dendritic cell maturation, trafficking to the lymph nodes and subsequent T-cell activation. Involved in antimicrobial response of innate immune cells; activation enhances phagocytosis of Gram-positive and killing of Gram-negative bacteria. Acts synergistically with interferon-gamma in enhancing antiviral responses. Mediates activation of pro-inflammatory and pro-fibrotic responses in fibroblasts, triggered by coagulation factor Xa (F10). Probably mediates activation of barrier protective signaling responses in endothelial cells, triggered by coagulation factor Xa (F10). The chain is Proteinase-activated receptor 2 (F2rl1) from Mus musculus (Mouse).